We begin with the raw amino-acid sequence, 235 residues long: MELATELKEGILLVDKPQGRTSFSLIRTLTKLIGVKKIGHAGTLDPFATGVMVMLIGRKFTRLSDVLLFEDKEYAAIAHLGTTTDSYDCDGKIVGRSKKVPTYEEILEAALYFQGEIQQIPPMFSAKKINGKKLYEYARQGLSIERRQSTVQVSLQITKYEYPLLYFSVQCSKGTYIRSIAHELGNMLGCGAYLEELRRLRSGSFSIDQCIDGCLLDRPDFDVSPYLRDFNGNIL.

The Nucleophile role is filled by D45.

This sequence belongs to the pseudouridine synthase TruB family. Type 1 subfamily.

It carries out the reaction uridine(55) in tRNA = pseudouridine(55) in tRNA. Its function is as follows. Responsible for synthesis of pseudouridine from uracil-55 in the psi GC loop of transfer RNAs. The protein is tRNA pseudouridine synthase B of Chlamydia felis (strain Fe/C-56) (Chlamydophila felis).